The sequence spans 320 residues: Malate dehydrogenase (320 aa).

NAD(+) contacts are provided by residues 10–15 (GAGQIG) and Asp34. Residues Arg83 and Arg89 each coordinate substrate. NAD(+)-binding positions include Asn96 and 119-121 (ITN). Substrate is bound by residues Asn121 and Arg152. His176 acts as the Proton acceptor in catalysis.

It belongs to the LDH/MDH superfamily. MDH type 3 family.

It catalyses the reaction (S)-malate + NAD(+) = oxaloacetate + NADH + H(+). Catalyzes the reversible oxidation of malate to oxaloacetate. This Methylobacterium radiotolerans (strain ATCC 27329 / DSM 1819 / JCM 2831 / NBRC 15690 / NCIMB 10815 / 0-1) protein is Malate dehydrogenase.